The chain runs to 369 residues: Histidinol-phosphate aminotransferase (369 aa).

A disordered region spans residues 1 to 39 (MSFGIDDLPVRDELRGKSPYGAPQLDVPVRLNTNENPYP). Lysine 230 is modified (N6-(pyridoxal phosphate)lysine).

The protein belongs to the class-II pyridoxal-phosphate-dependent aminotransferase family. Histidinol-phosphate aminotransferase subfamily. As to quaternary structure, homodimer. Pyridoxal 5'-phosphate serves as cofactor.

The catalysed reaction is L-histidinol phosphate + 2-oxoglutarate = 3-(imidazol-4-yl)-2-oxopropyl phosphate + L-glutamate. The protein operates within amino-acid biosynthesis; L-histidine biosynthesis; L-histidine from 5-phospho-alpha-D-ribose 1-diphosphate: step 7/9. In Streptomyces avermitilis (strain ATCC 31267 / DSM 46492 / JCM 5070 / NBRC 14893 / NCIMB 12804 / NRRL 8165 / MA-4680), this protein is Histidinol-phosphate aminotransferase (hisC).